Reading from the N-terminus, the 204-residue chain is Flavin-dependent thymidylate synthase (204 aa).

Residues 1-204 form the ThyX domain; that stretch reads MTVTLMQHTS…RYLFCLNQEG (204 aa). Residues S50 and 74-76 each bind FAD; that span reads RHR. DUMP-binding positions include 71–74, 84–86, and K143; these read ELAR and SSR. A ThyX motif motif is present at residues 74 to 84; the sequence is RHRIASLSVKS. FAD contacts are provided by residues 159–161 and N165; that span reads NAR. R170 contributes to the dUMP binding site. Catalysis depends on R170, which acts as the Involved in ionization of N3 of dUMP, leading to its activation.

It belongs to the thymidylate synthase ThyX family. In terms of assembly, homotetramer. It depends on FAD as a cofactor.

The catalysed reaction is dUMP + (6R)-5,10-methylene-5,6,7,8-tetrahydrofolate + NADPH + H(+) = dTMP + (6S)-5,6,7,8-tetrahydrofolate + NADP(+). Its pathway is pyrimidine metabolism; dTTP biosynthesis. Its function is as follows. Catalyzes the reductive methylation of 2'-deoxyuridine-5'-monophosphate (dUMP) to 2'-deoxythymidine-5'-monophosphate (dTMP) while utilizing 5,10-methylenetetrahydrofolate (mTHF) as the methyl donor, and NADPH and FADH(2) as the reductant. This is Flavin-dependent thymidylate synthase from Wolinella succinogenes (strain ATCC 29543 / DSM 1740 / CCUG 13145 / JCM 31913 / LMG 7466 / NCTC 11488 / FDC 602W) (Vibrio succinogenes).